Consider the following 709-residue polypeptide: Kelch domain-containing protein STK_09390 (709 aa).

The N-terminal stretch at 1 to 22 (MKRNTLLALVLVILIFPTLSTA) is a signal peptide. 6 Kelch repeats span residues 49–94 (KIFL…VCNN), 96–140 (LYVV…SYDY), 141–192 (KIYV…FNGS), 193–240 (ALFV…YYNG), 242–288 (MYLV…VQIG), and 290–340 (KLII…DTNA). Fibronectin type-III domains lie at 315–405 (PPPK…VPNP), 406–488 (PIIK…ASKA), 489–566 (NLTV…IYYI), and 568–643 (PASP…NDVR).

In Sulfurisphaera tokodaii (strain DSM 16993 / JCM 10545 / NBRC 100140 / 7) (Sulfolobus tokodaii), this protein is Kelch domain-containing protein STK_09390.